The sequence spans 455 residues: Notoamide E oxidase notB' (455 aa).

Residues 11–31 (PAILSPADLTVIIVGLGIAGL) traverse the membrane as a helical segment. 2 residues coordinate FAD: Glu48 and Gly61. Residue Asn75 is glycosylated (N-linked (GlcNAc...) asparagine). Arg121 provides a ligand contact to FAD. Catalysis depends on residues Arg199 and Tyr229. Residues Asp324 and Gly337 each coordinate FAD.

Belongs to the paxM FAD-dependent monooxygenase family. The cofactor is FAD.

Its subcellular location is the membrane. It catalyses the reaction notoamide E + NADPH + O2 + H(+) = notoamide C + NADP(+) + H2O. The enzyme catalyses notoamide E + NADPH + O2 + H(+) = notoamide D + NADP(+) + H2O. Its pathway is alkaloid biosynthesis. Functionally, FAD-dependent monooxygenase; part of the gene cluster that mediates the biosynthesis of notoamide, a fungal indole alkaloid that belongs to a family of natural products containing a characteristic bicyclo[2.2.2]diazaoctane core. The first step of notoamide biosynthesis involves coupling of L-proline and L-tryptophan by the bimodular NRPS notE', to produce cyclo-L-tryptophan-L-proline called brevianamide F. The reverse prenyltransferase notF' then acts as a deoxybrevianamide E synthase and converts brevianamide F to deoxybrevianamide E via reverse prenylation at C-2 of the indole ring leading to the bicyclo[2.2.2]diazaoctane core. Deoxybrevianamide E is further hydroxylated at C-6 of the indole ring, likely catalyzed by the cytochrome P450 monooxygenase notG', to yield 6-hydroxy-deoxybrevianamide E. 6-hydroxy-deoxybrevianamide E is a specific substrate of the prenyltransferase notC' for normal prenylation at C-7 to produce 6-hydroxy-7-prenyl-deoxybrevianamide, also called notoamide S. As the proposed pivotal branching point in notoamide biosynthesis, notoamide S can be diverted to notoamide E through an oxidative pyran ring closure putatively catalyzed by either notH' cytochrome P450 monooxygenase or the notD' FAD-linked oxidoreductase. This step would be followed by an indole 2,3-epoxidation-initiated pinacol-like rearrangement catalyzed by the notB' FAD-dependent monooxygenase leading to the formation of notoamide C and notoamide D. On the other hand notoamide S is converted to notoamide T by notH' (or notD'), a bifunctional oxidase that also functions as the intramolecular Diels-Alderase responsible for generation of (-)-notoamide T. To generate antipodal (+)-notoaminide T, notH (or notD) in Aspergillus strain MF297-2 is expected to catalyze a Diels-Alder reaction leading to the opposite stereochemistry. The remaining oxidoreductase notD' (or notH') likely catalyzes the oxidative pyran ring formation to yield (-)-stephacidin A. The FAD-dependent monooxygenase notI' is highly similar to notB' and is predicted to catalyze a similar conversion from (-)-stephacidin A to (+)-notoamide B via the 2,3-epoxidation of (-)-stephacidin A followed by a pinacol-type rearrangement. Finally, it remains unclear which enzyme could be responsible for the final hydroxylation steps leading to notoamide A and sclerotiamide. This is Notoamide E oxidase notB' from Aspergillus versicolor.